Here is a 273-residue protein sequence, read N- to C-terminus: 1,4-dihydroxy-2-naphthoyl-CoA synthase (273 aa).

Residues R34, 73–77, Y85, 117–121, T143, S149, Y246, and K261 contribute to the substrate site; these read SGGDQ and YAVGG. 142–144 lines the hydrogencarbonate pocket; that stretch reads QTG. Positions 254–265 are enriched in basic and acidic residues; the sequence is GRDAFKEKRDPD. The interval 254–273 is disordered; sequence GRDAFKEKRDPDFDQFPKFP.

This sequence belongs to the enoyl-CoA hydratase/isomerase family. MenB subfamily. It depends on hydrogencarbonate as a cofactor.

The enzyme catalyses 2-succinylbenzoyl-CoA + H(+) = 1,4-dihydroxy-2-naphthoyl-CoA + H2O. It functions in the pathway quinol/quinone metabolism; 1,4-dihydroxy-2-naphthoate biosynthesis; 1,4-dihydroxy-2-naphthoate from chorismate: step 6/7. It participates in quinol/quinone metabolism; menaquinone biosynthesis. Its function is as follows. Converts o-succinylbenzoyl-CoA (OSB-CoA) to 1,4-dihydroxy-2-naphthoyl-CoA (DHNA-CoA). This chain is 1,4-dihydroxy-2-naphthoyl-CoA synthase, found in Staphylococcus aureus (strain MSSA476).